The primary structure comprises 94 residues: MLKPLGDRIVIELIQTEEKTASGIVLPDTAKEKPQEGKVVAVGSGRVLDNGERVAPEVSVGDRIIFSKYAGTEVKYDGKEYLILRESDILAVIG.

Belongs to the GroES chaperonin family. Heptamer of 7 subunits arranged in a ring. Interacts with the chaperonin GroEL.

The protein resides in the cytoplasm. Its function is as follows. Together with the chaperonin GroEL, plays an essential role in assisting protein folding. The GroEL-GroES system forms a nano-cage that allows encapsulation of the non-native substrate proteins and provides a physical environment optimized to promote and accelerate protein folding. GroES binds to the apical surface of the GroEL ring, thereby capping the opening of the GroEL channel. The protein is Co-chaperonin GroES of Anoxybacillus flavithermus (strain DSM 21510 / WK1).